Consider the following 339-residue polypeptide: Glycerol-3-phosphate dehydrogenase [NAD(P)+] (339 aa).

4 residues coordinate NADPH: serine 15, tyrosine 16, histidine 36, and lysine 110. Sn-glycerol 3-phosphate-binding residues include lysine 110, glycine 139, and threonine 141. Alanine 143 is a binding site for NADPH. Sn-glycerol 3-phosphate contacts are provided by lysine 195, aspartate 248, serine 258, arginine 259, and asparagine 260. Lysine 195 acts as the Proton acceptor in catalysis. NADPH is bound at residue arginine 259. NADPH is bound by residues valine 283 and glutamate 285.

It belongs to the NAD-dependent glycerol-3-phosphate dehydrogenase family.

Its subcellular location is the cytoplasm. The catalysed reaction is sn-glycerol 3-phosphate + NAD(+) = dihydroxyacetone phosphate + NADH + H(+). The enzyme catalyses sn-glycerol 3-phosphate + NADP(+) = dihydroxyacetone phosphate + NADPH + H(+). The protein operates within membrane lipid metabolism; glycerophospholipid metabolism. Catalyzes the reduction of the glycolytic intermediate dihydroxyacetone phosphate (DHAP) to sn-glycerol 3-phosphate (G3P), the key precursor for phospholipid synthesis. In Escherichia fergusonii (strain ATCC 35469 / DSM 13698 / CCUG 18766 / IAM 14443 / JCM 21226 / LMG 7866 / NBRC 102419 / NCTC 12128 / CDC 0568-73), this protein is Glycerol-3-phosphate dehydrogenase [NAD(P)+].